An 879-amino-acid chain; its full sequence is Phosphoenolpyruvate carboxylase (879 aa).

Active-site residues include H137 and K545.

This sequence belongs to the PEPCase type 1 family. Mg(2+) is required as a cofactor.

It carries out the reaction oxaloacetate + phosphate = phosphoenolpyruvate + hydrogencarbonate. In terms of biological role, forms oxaloacetate, a four-carbon dicarboxylic acid source for the tricarboxylic acid cycle. In Yersinia enterocolitica serotype O:8 / biotype 1B (strain NCTC 13174 / 8081), this protein is Phosphoenolpyruvate carboxylase.